The primary structure comprises 676 residues: Zinc finger protein 418 (676 aa).

In terms of domain architecture, KRAB spans 5–91 (VAFEDVAVNF…HSCEMCGAIL (87 aa)). C2H2-type zinc fingers lie at residues 82–105 (HSCE…GTHH), 230–252 (CYCW…QRVH), 258–280 (YECG…QRVH), 286–308 (YECG…QRVH), 314–336 (YECG…QRVH), 342–364 (YECE…QRGH), 370–392 (YECE…HRVH), 398–420 (YECG…QRGH), 426–448 (YECG…QRSH), 454–476 (YECR…QRVH), 482–504 (YECN…QRVH), 510–532 (FECS…RRVH), 538–560 (YECG…QKTH), 591–613 (YECR…QRLH), 619–641 (YECS…RRVH), and 647–669 (YECS…QRVH).

It belongs to the krueppel C2H2-type zinc-finger protein family. Highly expressed in heart.

Its subcellular location is the nucleus. Functionally, transcriptional repressor. May play a role as regulator of the ubiquitin-proteasome system and autophagy-lysosomal pathway. This chain is Zinc finger protein 418 (ZNF418), found in Homo sapiens (Human).